Consider the following 256-residue polypeptide: Triosephosphate isomerase (256 aa).

Position 9 to 11 (9 to 11) interacts with substrate; sequence NWK. The active-site Electrophile is H97. The active-site Proton acceptor is the E169. Residues G175, S214, and 235–236 contribute to the substrate site; that span reads GG.

Belongs to the triosephosphate isomerase family. Homodimer.

The protein localises to the cytoplasm. It catalyses the reaction D-glyceraldehyde 3-phosphate = dihydroxyacetone phosphate. It participates in carbohydrate biosynthesis; gluconeogenesis. The protein operates within carbohydrate degradation; glycolysis; D-glyceraldehyde 3-phosphate from glycerone phosphate: step 1/1. Involved in the gluconeogenesis. Catalyzes stereospecifically the conversion of dihydroxyacetone phosphate (DHAP) to D-glyceraldehyde-3-phosphate (G3P). This chain is Triosephosphate isomerase, found in Aliivibrio fischeri (strain ATCC 700601 / ES114) (Vibrio fischeri).